The sequence spans 677 residues: MEASRGPPRVKNKAPAPQQISAEQLLREAVDRQEPALQAPTQRFADLEELHEYQGRKRKEFEDYVRRNRISMNNWMRYAQWELEQKEFRRARSVFERALDVDPTAVVLWIRYIEAEMKTRNINHARNLLDRAVTIYSRVDKLWYKYVYMEEMLGNIPGTRQVFERWMSWEPDEGAWGAYIKLEKRYNEFDRVRAIFERFTVVHPEPKNWIKWARFEEEYGTSDMVREVYGLAIETLGEDFMDEKLFIAYARYEAKLKEFERARAIYKYALDRLPRAKSVALHKAYTTFEKQFGDREGVEDVILSKRRVQYEEQIKENPKNYDIWFDFVRLEESSGDVERVRDVYERAIAQMPPSQEKRHWRRYIYLWIFYALWEELEAKDMERAHQIYQECIRLIPHKKFTFAKIWLMKAQFEIRQMDLQAARKTLGHAIGACPKDKLFKGYIDLERQLFEFVRCRKLFEKQIEWSPSNCQAWIKFAELERGLDDIDRARAIYELGISQPVLDMPELLWKSYIDFEEYEGEYDRTRALYERLLEKTNHVKVWINFARFEINIPEGEEEDEDEEEKPVSEEAKRRARMVFERAHKVFKEKEMKEERVALLNAWKSFEQTHGSPDDIAKIERQMPSKVKKRRKLDDDRYEEYLDYMFPADDESSAKLSQILQMAHKWKKEQASKASKET.

16 HAT repeats span residues 52 to 84, 86 to 118, 120 to 152, 154 to 185, 187 to 218, 220 to 255, 257 to 291, 301 to 333, 335 to 369, 379 to 415, 417 to 448, 450 to 482, 484 to 518, 520 to 551, 570 to 608, and 613 to 646; these read EYQG…WELE, KEFR…AEMK, RNIN…MEEM, GNIP…LEKR, NEFD…FEEE, GTSD…YEAK, KEFE…FEKQ, VILS…LEES, GDVE…LWIF, KDME…FEIR, MDLQ…LERQ, FEFV…LERG, DDID…FEEY, GEYD…FEIN, EAKR…FEQT, and DDIA…YMFP.

The protein belongs to the crooked-neck family. As to quaternary structure, associated with the spliceosome.

The protein localises to the nucleus. Involved in pre-mRNA splicing and cell cycle progression. Required for the spliceosome assembly and initiation of the DNA replication. The protein is Pre-mRNA-splicing factor CLF1 (CLF1) of Paracoccidioides brasiliensis.